The primary structure comprises 93 residues: Antitoxin RelF (93 aa).

This sequence belongs to the phD/YefM antitoxin family. Interacts with toxin RelG, which neutralizes the toxin. Also interacts with toxins RelE and RelK in vitro, in M.smegmatis coexpression with non-cognate toxins increases the toxicity of RelE but not of RelK.

Its function is as follows. Antitoxin component of a type II toxin-antitoxin (TA) system. Upon expression in M.smegmatis neutralizes the effect of toxin RelE2. Functionally, induces its own promoter, in combination with RelG represses its own promoter. Has been seen to bind DNA in complex with toxin RelG but not alone. The chain is Antitoxin RelF (relF) from Mycobacterium tuberculosis (strain ATCC 25618 / H37Rv).